Consider the following 439-residue polypeptide: Lactamase-like protein nscB (439 aa).

Positions 214, 216, 218, and 219 each coordinate Zn(2+). D218 functions as the Proton donor/acceptor in the catalytic mechanism.

The protein belongs to the metallo-beta-lactamase superfamily. Zn(2+) is required as a cofactor.

It functions in the pathway secondary metabolite biosynthesis. In terms of biological role, lactamase-like protein; part of the gene cluster that mediates the biosynthesis of neosartoricin B, a prenylated anthracenone that probably exhibits T-cell antiproliferative activity, suggestive of a physiological role as an immunosuppressive agent. The non-reducing polyketide synthase nscA probably synthesizes and cyclizes the decaketide backbone. The hydrolase nscB then mediates the product release through hydrolysis followed by spontaneous decarboxylation. The prenyltransferase nscD catalyzes the addition of the dimethylallyl group to the aromatic C5. The FAD-dependent monooxygenase nscC is then responsible for the stereospecific hydroxylation at C2. Neosartoricin B can be converted into two additional compounds neosartoricins C and D. Neosartoricin C is a spirocyclic compound that is cyclized through the attack of C3 hydroxyl on C14, followed by dehydration. On the other hand, neosartoricin D is a further cyclized compound in which attack of C2 on C14 in neosartoricin C results in the formation of the acetal-containing dioxabicyclo-octanone ring. Both of these compounds are novel and possibly represent related metabolites of the gene cluster. This Arthroderma benhamiae (strain ATCC MYA-4681 / CBS 112371) (Trichophyton mentagrophytes) protein is Lactamase-like protein nscB.